A 548-amino-acid chain; its full sequence is Chaperonin GroEL (548 aa).

Residues Thr30–Pro33, Lys51, Asp87–Thr91, Gly415, Asn479–Ala481, and Asp495 contribute to the ATP site.

Belongs to the chaperonin (HSP60) family. In terms of assembly, forms a cylinder of 14 subunits composed of two heptameric rings stacked back-to-back. Interacts with the co-chaperonin GroES.

The protein resides in the cytoplasm. It catalyses the reaction ATP + H2O + a folded polypeptide = ADP + phosphate + an unfolded polypeptide.. Its function is as follows. Together with its co-chaperonin GroES, plays an essential role in assisting protein folding. The GroEL-GroES system forms a nano-cage that allows encapsulation of the non-native substrate proteins and provides a physical environment optimized to promote and accelerate protein folding. This chain is Chaperonin GroEL, found in Klebsiella aerogenes (strain ATCC 13048 / DSM 30053 / CCUG 1429 / JCM 1235 / KCTC 2190 / NBRC 13534 / NCIMB 10102 / NCTC 10006 / CDC 819-56) (Enterobacter aerogenes).